The chain runs to 474 residues: Gamma-aminobutyric acid receptor subunit beta-1 (474 aa).

An N-terminal signal peptide occupies residues methionine 1–alanine 25. Residues histidine 26 to tyrosine 245 are Extracellular-facing. 2 N-linked (GlcNAc...) asparagine glycosylation sites follow: asparagine 33 and asparagine 105. Position 122 (tyrosine 122) interacts with histamine. Cysteine 161 and cysteine 175 are disulfide-bonded. N-linked (GlcNAc...) asparagine glycosylation occurs at asparagine 174. Residues serine 181–tyrosine 182 and threonine 227 each bind histamine. Residues tyrosine 182 and threonine 227 each contribute to the 4-aminobutanoate site. Helical transmembrane passes span phenylalanine 246–isoleucine 267, alanine 271–leucine 293, and alanine 305–valine 327. Topologically, residues asparagine 328–lysine 451 are cytoplasmic. A helical transmembrane segment spans residues tryptophan 452–valine 473.

It belongs to the ligand-gated ion channel (TC 1.A.9) family. Gamma-aminobutyric acid receptor (TC 1.A.9.5) subfamily. GABRB1 sub-subfamily. As to quaternary structure, heteropentamer, formed by a combination of alpha (GABRA1-6), beta (GABRB1-3), gamma (GABRG1-3), delta (GABRD), epsilon (GABRE), rho (GABRR1-3), pi (GABRP) and theta (GABRQ) chains, each subunit exhibiting distinct physiological and pharmacological properties. Binds UBQLN1.

It localises to the postsynaptic cell membrane. The protein localises to the cell membrane. The enzyme catalyses chloride(in) = chloride(out). Its activity is regulated as follows. Potentiated by histamine. Functionally, beta subunit of the heteropentameric ligand-gated chloride channel gated by gamma-aminobutyric acid (GABA), a major inhibitory neurotransmitter in the brain. GABA-gated chloride channels, also named GABA(A) receptors (GABAAR), consist of five subunits arranged around a central pore and contain GABA active binding site(s) located at the alpha and beta subunit interface(s). When activated by GABA, GABAARs selectively allow the flow of chloride anions across the cell membrane down their electrochemical gradient. Chloride influx into the postsynaptic neuron following GABAAR opening decreases the neuron ability to generate a new action potential, thereby reducing nerve transmission. Beta-containing GABAARs can simultaneously bind GABA and histamine where histamine binds at the interface of two neighboring beta subunits, which may be involved in the regulation of sleep and wakefulness. This chain is Gamma-aminobutyric acid receptor subunit beta-1, found in Rattus norvegicus (Rat).